Consider the following 263-residue polypeptide: MPEGPEIRRAADNLEAAIKGKPLTDVWFAFPQLKTYQSQLIGQHVTHVETRGKALLTHFSNDLTLYSHNQLYGVWRVVDTGEESQTTRVLRVKLQTADKTILLYSASDIEMLTPEQLTTHPFLQRVGPDVLDPNLTPEVVKERLLSPRFRNRQFAGLLLDQAFLAGLGNYLRVEILWQVGLTGNHKAKDLNAAQLDALAHALLDIPRFSYATRGQVDENKHHGALFRFKVFHRDGELCERCGGIIEKTTLSSRPFYWCPGCQH.

Pro-2 functions as the Schiff-base intermediate with DNA in the catalytic mechanism. Glu-3 functions as the Proton donor in the catalytic mechanism. The active-site Proton donor; for beta-elimination activity is the Lys-53. Gln-70, Arg-125, and Asn-169 together coordinate DNA. The FPG-type zinc-finger motif lies at 229–263; that stretch reads KVFHRDGELCERCGGIIEKTTLSSRPFYWCPGCQH. Residue Arg-253 is the Proton donor; for delta-elimination activity of the active site.

The protein belongs to the FPG family. The cofactor is Zn(2+).

It carries out the reaction 2'-deoxyribonucleotide-(2'-deoxyribose 5'-phosphate)-2'-deoxyribonucleotide-DNA = a 3'-end 2'-deoxyribonucleotide-(2,3-dehydro-2,3-deoxyribose 5'-phosphate)-DNA + a 5'-end 5'-phospho-2'-deoxyribonucleoside-DNA + H(+). Involved in base excision repair of DNA damaged by oxidation or by mutagenic agents. Acts as a DNA glycosylase that recognizes and removes damaged bases. Has a preference for oxidized pyrimidines, such as thymine glycol, 5,6-dihydrouracil and 5,6-dihydrothymine. Has AP (apurinic/apyrimidinic) lyase activity and introduces nicks in the DNA strand. Cleaves the DNA backbone by beta-delta elimination to generate a single-strand break at the site of the removed base with both 3'- and 5'-phosphates. The chain is Endonuclease 8 from Escherichia coli O157:H7.